A 390-amino-acid chain; its full sequence is ATP-sensitive inward rectifier potassium channel 11 (390 aa).

Over 1–65 (MLSRKGIIPE…LQDVFTTLVD (65 aa)) the chain is Cytoplasmic. ATP is bound by residues Asn48 and Arg50. The chain crosses the membrane as a helical span at residues 66–92 (LKWPHTLLIFTMSFLCSWLLFAMVWWL). Over 93 to 116 (IAFAHGDLAPGEGTTVPCVTSIHS) the chain is Extracellular. Cys110 and Cys142 are oxidised to a cystine. Residues 117-133 (FSSAFLFSIEVQVTIGF) constitute an intramembrane region (discontinuously helical; Pore-forming). Residues Thr130 and Phe133 each coordinate K(+). Residues 130-135 (TIGFGG) carry the Selectivity filter motif. Residues 134-142 (GGRMVTEEC) are Extracellular-facing. The helical transmembrane segment at 143-171 (PLAILILIVQNIVGLMINAIMLGCIFMKT) threads the bilayer. At 172 to 390 (SQAHRRAETL…RFSISPDSLS (219 aa)) the chain is on the cytoplasmic side. Residue Arg176 participates in a 1,2-diacyl-sn-glycero-3-phospho-(1D-myo-inositol-4,5-bisphosphate) binding. Residue Tyr330 participates in ATP binding. Residue Thr341 is modified to Phosphothreonine; by MAPK1. The residue at position 385 (Ser385) is a Phosphoserine; by MAPK1.

This sequence belongs to the inward rectifier-type potassium channel (TC 1.A.2.1) family. KCNJ11 subfamily. Homotetramer; the homotetramer binds four ATP molecules (one ATP per subunit). Forms an heterooctamer with ABCC8/SUR1; one KCNJ11 homotetramer interacts with four ABCC8/SUR1 molecules. Interacts with ABCC9/SUR2. Post-translationally, phosphorylation by MAPK1 results in changes in channel gating that destabilize the closed states and reduce the ATP sensitivity.

It localises to the membrane. It carries out the reaction K(+)(in) = K(+)(out). KATP channels are regulated by cytoplasmic ATP/ADP ratios; ATP inhibits the channel by closing the pore, while ADP activates the channel. Activated by phosphatidylinositol 4,5-biphosphate (PtdIns(4,5)P2). Functionally, inward rectifier potassium channel that forms the pore of ATP-sensitive potassium channels (KATP), regulating potassium permeability as a function of cytoplasmic ATP and ADP concentrations in many different cells. Inward rectifier potassium channels are characterized by a greater tendency to allow potassium to flow into the cell rather than out of it. Their voltage dependence is regulated by the concentration of extracellular potassium; as external potassium is raised, the voltage range of the channel opening shifts to more positive voltages. The inward rectification is mainly due to the blockage of outward current by internal magnesium. Can be blocked by extracellular barium. In pancreatic cells, it forms KATP channels with ABCC8/SUR1. Can form cardiac and smooth muscle-type KATP channels with ABCC9. The polypeptide is ATP-sensitive inward rectifier potassium channel 11 (KCNJ11) (Cavia porcellus (Guinea pig)).